We begin with the raw amino-acid sequence, 133 residues long: Protein FwdD (133 aa).

This chain is Protein FwdD (fwdD), found in Methanocaldococcus jannaschii (strain ATCC 43067 / DSM 2661 / JAL-1 / JCM 10045 / NBRC 100440) (Methanococcus jannaschii).